Here is an 810-residue protein sequence, read N- to C-terminus: Protein kinase C-binding protein NELL1 (810 aa).

The signal sequence occupies residues 1-21 (MPMDVILVLWFCVCTARTVLG). N40, N53, N83, N224, N294, and N372 each carry an N-linked (GlcNAc...) asparagine glycan. Positions 57–227 (AFLFQDVQRE…TQCPNLNRTC (171 aa)) constitute a Laminin G-like domain. Residues 271-332 (KTCQVSGLLY…ISGQCCKVCR (62 aa)) form the VWFC 1 domain. 3 disulfides stabilise this stretch: C395–C407, C401–C416, and C418–C432. D434, I435, and E437 together coordinate Ca(2+). One can recognise an EGF-like 1; calcium-binding domain in the interval 434–475 (DIDECAAKMHYCHANTVCVNLPGLYRCDCVPGYIRVDDFSCT). 15 disulfides stabilise this stretch: C438-C451, C445-C460, C462-C474, C480-C493, C487-C502, C504-C515, C519-C529, C523-C535, C537-C546, C553-C566, C560-C575, C577-C594, C600-C613, C607-C622, and C624-C630. Ca(2+)-binding residues include N453, L454, and L457. Residues 476 to 516 (EHDDCGSGQHNCDKNAICTNTVQGHSCTCQPGYVGNGTICK) form the EGF-like 2; calcium-binding domain. Residue N511 is glycosylated (N-linked (GlcNAc...) asparagine). The EGF-like 3 domain maps to 517-547 (AFCEEGCRYGGTCVAPNKCVCPSGFTGSHCE). Residues 549–587 (DIDECAEGFVECHNHSRCVNLPGWYHCECRSGFHDDGTY) form the EGF-like 4; calcium-binding domain. A glycan (N-linked (GlcNAc...) asparagine) is linked at N562. In terms of domain architecture, EGF-like 5; calcium-binding spans 596 to 631 (DIDECALRTHTCWNDSACINLAGGFDCLCPSGPSCS). N-linked (GlcNAc...) asparagine glycosylation is present at N609. VWFC domains are found at residues 632–687 (GDCP…PECD) and 692–750 (SQCL…PRCV). N708 carries an N-linked (GlcNAc...) asparagine glycan.

As to quaternary structure, interacts with ATRAID; the interaction promotes osteoblast cell differentiation and mineralization. Homotrimer. Binds to PKC beta-1. Interacts with ROBO3.

The protein resides in the cytoplasm. It is found in the nucleus envelope. Its subcellular location is the secreted. Plays a role in the control of cell growth and differentiation. Promotes osteoblast cell differentiation and terminal mineralization. This Rattus norvegicus (Rat) protein is Protein kinase C-binding protein NELL1 (Nell1).